The following is a 256-amino-acid chain: uncharacterized protein (256 aa).

Positions Met1–Gly23 are cleaved as a signal peptide. A lipid anchor (N-palmitoyl cysteine) is attached at Cys24. Residue Cys24 is the site of S-diacylglycerol cysteine attachment.

It belongs to the staphylococcal tandem lipoprotein family.

It localises to the cell membrane. This is an uncharacterized protein from Staphylococcus aureus (strain COL).